The primary structure comprises 144 residues: Peroxisomal membrane protein PEX34 (144 aa).

Transmembrane regions (helical) follow at residues 18–30 (NIWS…LDFF), 52–73 (VWLC…KLCK), and 109–131 (TAAL…RLFK).

Homooligomer. Interacts with PEX11, PEX25 and PEX27.

The protein localises to the peroxisome membrane. In terms of biological role, in concert with the three peroxisome divisional factors, PEX11, PEX25 and PEX27, controls peroxisome morphology and abundance under conditions of peroxisome proliferation. Maintains mature peroxisomes in actively dividing cells. This chain is Peroxisomal membrane protein PEX34 (PEX34), found in Saccharomyces cerevisiae (strain ATCC 204508 / S288c) (Baker's yeast).